The primary structure comprises 128 residues: D-ribose pyranase (128 aa).

Histidine 20 (proton donor) is an active-site residue. Substrate is bound by residues aspartate 28, histidine 95, and 117–119; that span reads YSN.

This sequence belongs to the RbsD / FucU family. RbsD subfamily. Homodecamer.

It localises to the cytoplasm. The enzyme catalyses beta-D-ribopyranose = beta-D-ribofuranose. Its pathway is carbohydrate metabolism; D-ribose degradation; D-ribose 5-phosphate from beta-D-ribopyranose: step 1/2. Catalyzes the interconversion of beta-pyran and beta-furan forms of D-ribose. This Thermosipho africanus (strain TCF52B) protein is D-ribose pyranase.